A 369-amino-acid chain; its full sequence is Anhydro-N-acetylmuramic acid kinase (369 aa).

12 to 19 (GTSMDGID) contributes to the ATP binding site.

This sequence belongs to the anhydro-N-acetylmuramic acid kinase family.

It carries out the reaction 1,6-anhydro-N-acetyl-beta-muramate + ATP + H2O = N-acetyl-D-muramate 6-phosphate + ADP + H(+). It participates in amino-sugar metabolism; 1,6-anhydro-N-acetylmuramate degradation. Its pathway is cell wall biogenesis; peptidoglycan recycling. In terms of biological role, catalyzes the specific phosphorylation of 1,6-anhydro-N-acetylmuramic acid (anhMurNAc) with the simultaneous cleavage of the 1,6-anhydro ring, generating MurNAc-6-P. Is required for the utilization of anhMurNAc either imported from the medium or derived from its own cell wall murein, and thus plays a role in cell wall recycling. The protein is Anhydro-N-acetylmuramic acid kinase of Shewanella sediminis (strain HAW-EB3).